A 503-amino-acid chain; its full sequence is Probable cytosol aminopeptidase (503 aa).

The Mn(2+) site is built by lysine 270 and aspartate 275. Lysine 282 is an active-site residue. Residues aspartate 293, aspartate 352, and glutamate 354 each contribute to the Mn(2+) site. Arginine 356 is a catalytic residue.

It belongs to the peptidase M17 family. Mn(2+) serves as cofactor.

The protein resides in the cytoplasm. It carries out the reaction Release of an N-terminal amino acid, Xaa-|-Yaa-, in which Xaa is preferably Leu, but may be other amino acids including Pro although not Arg or Lys, and Yaa may be Pro. Amino acid amides and methyl esters are also readily hydrolyzed, but rates on arylamides are exceedingly low.. It catalyses the reaction Release of an N-terminal amino acid, preferentially leucine, but not glutamic or aspartic acids.. In terms of biological role, presumably involved in the processing and regular turnover of intracellular proteins. Catalyzes the removal of unsubstituted N-terminal amino acids from various peptides. The chain is Probable cytosol aminopeptidase from Escherichia coli O139:H28 (strain E24377A / ETEC).